Here is a 274-residue protein sequence, read N- to C-terminus: Dehydration-responsive element-binding protein 2A (274 aa).

2 stretches are compositionally biased toward basic and acidic residues: residues 1–10 (MERGEGRRGD) and 35–50 (KWWKEQNQKLQEENSS). The segment at 1–75 (MERGEGRRGD…KGGPENSNCA (75 aa)) is disordered. Residues 75-132 (AYRGVRQRTWGKWVAEIREPNRGRRLWLGSFPTALEAAHAYDEAARAMYGPTARVNFA) constitute a DNA-binding region (AP2/ERF).

Belongs to the AP2/ERF transcription factor family. ERF subfamily.

It localises to the nucleus. Functionally, transcriptional activator that binds specifically to the DNA sequence 5'-[AG]CCGAC-3'. Binding to the C-repeat/DRE element mediates high salinity- and dehydration-inducible transcription. The protein is Dehydration-responsive element-binding protein 2A (DREB2A) of Oryza sativa subsp. indica (Rice).